Reading from the N-terminus, the 721-residue chain is Catalase-peroxidase (721 aa).

Residues Trp-89–Tyr-212 constitute a cross-link (tryptophyl-tyrosyl-methioninium (Trp-Tyr) (with M-238)). The active-site Proton acceptor is His-90. Residues Tyr-212–Met-238 constitute a cross-link (tryptophyl-tyrosyl-methioninium (Tyr-Met) (with W-89)). His-253 is a binding site for heme b.

This sequence belongs to the peroxidase family. Peroxidase/catalase subfamily. In terms of assembly, homodimer or homotetramer. Heme b is required as a cofactor. In terms of processing, formation of the three residue Trp-Tyr-Met cross-link is important for the catalase, but not the peroxidase activity of the enzyme.

It catalyses the reaction H2O2 + AH2 = A + 2 H2O. The catalysed reaction is 2 H2O2 = O2 + 2 H2O. Its function is as follows. Bifunctional enzyme with both catalase and broad-spectrum peroxidase activity. The polypeptide is Catalase-peroxidase (Shewanella baltica (strain OS155 / ATCC BAA-1091)).